The following is a 166-amino-acid chain: Phospholipase A2 inhibitor (166 aa).

An N-terminal signal peptide occupies residues 1–19 (MRLILLSGLLLLGIFLANG). The C-type lectin domain occupies 46–161 (LRGAFLTVYK…CDDNLLVVCE (116 aa)). N-linked (GlcNAc...) asparagine glycosylation is found at Asn-61 and Asn-122. 2 cysteine pairs are disulfide-bonded: Cys-83/Cys-160 and Cys-138/Cys-152.

This sequence belongs to the alpha-type phospholipase A2 inhibitor family. In terms of assembly, homotrimer; non-covalently linked. In terms of tissue distribution, expressed by the liver.

It is found in the secreted. This phospholipase A2 inhibitor binds directly phospholipase A2 in the presence or absence of calcium. The polypeptide is Phospholipase A2 inhibitor (Bothrops alternatus (Urutu)).